Consider the following 59-residue polypeptide: Potassium channel toxin alpha-KTx 4.5 (59 aa).

An N-terminal signal peptide occupies residues 1-22 (MKAFYGVLIIFILISMLDLSQQ). Cystine bridges form between Cys29–Cys50, Cys35–Cys55, and Cys39–Cys57. Residues 48 to 55 (GKCMNGKC) form an interaction with Ca(2+)-activated K(+) channels region.

In terms of tissue distribution, expressed by the venom gland.

The protein resides in the secreted. Functionally, inhibits with low potency Kv1.1/KCNA1, Kv1.2/KCNA2, Kv1.3/KCNA3 and Kv11.1/KCNH2/ERG1 voltage-gated potassium channels. In Tityus costatus (Brazilian scorpion), this protein is Potassium channel toxin alpha-KTx 4.5.